The sequence spans 550 residues: Transcription factor p65 (550 aa).

Methionine 1 is subject to N-acetylmethionine. The 175-residue stretch at alanine 16–asparagine 190 folds into the RHD domain. Lysine 37 is covalently cross-linked (Glycyl lysine isopeptide (Lys-Gly) (interchain with G-Cter in SUMO3)). Cysteine 38 carries the post-translational modification Cysteine persulfide; alternate. The residue at position 38 (cysteine 38) is an S-nitrosocysteine; alternate. 4 positions are modified to N6-acetyllysine: lysine 122, lysine 123, lysine 218, and lysine 221. Residues lysine 122 and lysine 123 each participate in a glycyl lysine isopeptide (Lys-Gly) (interchain with G-Cter in SUMO3); alternate cross-link. Threonine 254 bears the Phosphothreonine mark. Phosphoserine is present on residues serine 276 and serine 281. Residues lysine 301–arginine 304 carry the Nuclear localization signal motif. Lysine 310 is modified (N6-acetyllysine; alternate). Lysine 310 carries the post-translational modification N6-methyllysine. Serine 311 carries the phosphoserine modification. Transcriptional activation domain regions lie at residues proline 342–leucine 388 and proline 414–glutamine 476. Residue threonine 434 is modified to Phosphothreonine. Serine 468 bears the Phosphoserine mark. Threonine 505 carries the post-translational modification Phosphothreonine. A transcriptional activation domain 2 region spans residues threonine 520–serine 550. Serine 535 is subject to Phosphoserine. Residues serine 535–alanine 543 carry the 9aaTAD motif.

Component of the NF-kappa-B p65-p50 complex. Component of the NF-kappa-B p65-c-Rel complex. Homodimer; component of the NF-kappa-B p65-p65 complex. Component of the NF-kappa-B p65-p52 complex. May interact with ETHE1. Binds TLE5 and TLE1. Interacts with TP53BP2. Binds to and is phosphorylated by the activated form of either RPS6KA4 or RPS6KA5. Interacts with ING4 and this interaction may be indirect. Interacts with CARM1, USP48 and UNC5CL. Interacts with IRAK1BP1. Interacts with NFKBID. Interacts with NFKBIA. Interacts with GSK3B. Interacts with NFKBIB. Interacts with NFKBIE. Interacts with NFKBIZ. Interacts with EHMT1 (via ANK repeats). Part of a 70-90 kDa complex at least consisting of CHUK, IKBKB, NFKBIA, RELA, ELP1 and MAP3K14. Interacts with HDAC3; HDAC3 mediates the deacetylation of RELA. Interacts with HDAC1; the interaction requires non-phosphorylated RELA. Interacts with CBP; the interaction requires phosphorylated RELA. Interacts (phosphorylated at 'Thr-254') with PIN1; the interaction inhibits p65 binding to NFKBIA. Interacts with SOCS1. Interacts with UXT. Interacts with MTDH and PHF11. Interacts with ARRB2. Interacts with NFKBIA (when phosphorylated), the interaction is direct; phosphorylated NFKBIA is part of a SCF(BTRC)-like complex lacking CUL1. Interacts with RNF25. Interacts (via C-terminus) with DDX1. Interacts with UFL1 and COMMD1. Interacts with BRMS1; this promotes deacetylation of 'Lys-310'. Interacts with NOTCH2. Directly interacts with MEN1; this interaction represses NFKB-mediated transactivation. Interacts with AKIP1, which promotes the phosphorylation and nuclear retention of RELA. Interacts (via the RHD) with GFI1; the interaction, after bacterial lipopolysaccharide (LPS) stimulation, inhibits the transcriptional activity by interfering with the DNA-binding activity to target gene promoter DNA. Interacts (when acetylated at Lys-310) with BRD4; leading to activation of the NF-kappa-B pathway. Interacts with MEFV. Interacts with CLOCK. Interacts (via N-terminus) with CPEN1; this interaction induces proteolytic cleavage of p65/RELA subunit and inhibition of NF-kappa-B transcriptional activity. Interacts with FOXP3. Interacts with CDK5RAP3; stimulates the interaction of RELA with HDAC1, HDAC2 and HDAC3 thereby inhibiting NF-kappa-B transcriptional activity. Interacts with DHX9; this interaction is direct and activates NF-kappa-B-mediated transcription. Interacts with LRRC25. Interacts with TBX21. Interacts with KAT2A. Interacts with ZBTB7A; involved in the control by RELA of the accessibility of target gene promoters. Directly interacts with DDX3X; this interaction may trap RELA in the cytoplasm, impairing nuclear relocalization upon TNF activating signals. Interacts with PHF2. Interacts with MKRN2; the interaction leads to its polyubiquitination and proteasome-dependent degradation. Interacts with ECSIT. Interacts with RAB28; the interaction contributes to RELA transport from cytoplasm to nucleus. Ubiquitinated by RNF182, leading to its proteasomal degradation. Degradation is required for termination of NF-kappa-B response. Polyubiquitinated via 'Lys-29'-linked ubiquitin; leading to lysosomal degradation. Post-translationally, monomethylated at Lys-310 by SETD6. Monomethylation at Lys-310 is recognized by the ANK repeats of EHMT1 and promotes the formation of repressed chromatin at target genes, leading to down-regulation of NF-kappa-B transcription factor activity. Phosphorylation at Ser-311 disrupts the interaction with EHMT1 without preventing monomethylation at Lys-310 and relieves the repression of target genes. In terms of processing, phosphorylation at Ser-311 disrupts the interaction with EHMT1 and promotes transcription factor activity. Phosphorylation on Ser-535 stimulates acetylation on Lys-310 and interaction with CBP; the phosphorylated and acetylated forms show enhanced transcriptional activity. Phosphorylation at Ser-276 by RPS6KA4 and RPS6KA5 promotes its transactivation and transcriptional activities. Phosphorylation at Ser-75 by herpes simplex virus 1/HHV-1 inhibits NF-kappa-B activation. Post-translationally, reversibly acetylated; the acetylation seems to be mediated by CBP, the deacetylation by HDAC3 and SIRT2. Acetylation at Lys-122 enhances DNA binding and impairs association with NFKBIA. Acetylation at Lys-310 is required for full transcriptional activity in the absence of effects on DNA binding and NFKBIA association. Acetylation at Lys-310 promotes interaction with BRD4. Acetylation can also lower DNA-binding and results in nuclear export. Interaction with BRMS1 promotes deacetylation of Lys-310. Lys-310 is deacetylated by SIRT2. In terms of processing, S-nitrosylation of Cys-38 inactivates the enzyme activity. Sulfhydration at Cys-38 mediates the anti-apoptotic activity by promoting the interaction with RPS3 and activating the transcription factor activity. Post-translationally, sumoylation by PIAS3 negatively regulates DNA-bound activated NF-kappa-B. In terms of processing, proteolytically cleaved within a conserved N-terminus region required for base-specific contact with DNA in a CPEN1-mediated manner, and hence inhibits NF-kappa-B transcriptional activity.

Its subcellular location is the nucleus. It localises to the cytoplasm. NF-kappa-B is a pleiotropic transcription factor present in almost all cell types and is the endpoint of a series of signal transduction events that are initiated by a vast array of stimuli related to many biological processes such as inflammation, immunity, differentiation, cell growth, tumorigenesis and apoptosis. NF-kappa-B is a homo- or heterodimeric complex formed by the Rel-like domain-containing proteins RELA/p65, RELB, NFKB1/p105, NFKB1/p50, REL and NFKB2/p52. The heterodimeric RELA-NFKB1 complex appears to be most abundant one. The dimers bind at kappa-B sites in the DNA of their target genes and the individual dimers have distinct preferences for different kappa-B sites that they can bind with distinguishable affinity and specificity. Different dimer combinations act as transcriptional activators or repressors, respectively. The NF-kappa-B heterodimeric RELA-NFKB1 and RELA-REL complexes, for instance, function as transcriptional activators. NF-kappa-B is controlled by various mechanisms of post-translational modification and subcellular compartmentalization as well as by interactions with other cofactors or corepressors. NF-kappa-B complexes are held in the cytoplasm in an inactive state complexed with members of the NF-kappa-B inhibitor (I-kappa-B) family. In a conventional activation pathway, I-kappa-B is phosphorylated by I-kappa-B kinases (IKKs) in response to different activators, subsequently degraded thus liberating the active NF-kappa-B complex which translocates to the nucleus. The inhibitory effect of I-kappa-B on NF-kappa-B through retention in the cytoplasm is exerted primarily through the interaction with RELA. RELA shows a weak DNA-binding site which could contribute directly to DNA binding in the NF-kappa-B complex. Besides its activity as a direct transcriptional activator, it is also able to modulate promoters accessibility to transcription factors and thereby indirectly regulate gene expression. Associates with chromatin at the NF-kappa-B promoter region via association with DDX1. Essential for cytokine gene expression in T-cells. The NF-kappa-B homodimeric RELA-RELA complex appears to be involved in invasin-mediated activation of IL-8 expression. Key transcription factor regulating the IFN response during SARS-CoV-2 infection. The sequence is that of Transcription factor p65 from Rattus norvegicus (Rat).